A 188-amino-acid polypeptide reads, in one-letter code: Putative manganese efflux pump MntP (188 aa).

The next 6 membrane-spanning stretches (helical) occupy residues 3-23 (WLTILGISVALAMDAFAVALA), 39-59 (LGFHFGLFQALMPIGGWLLGM), 65-85 (ISAYDHWIAFGLLAYVGGRMV), 104-124 (GMTMVMLSVATSIDAFAVGLS), 125-145 (IAMLGVSVWLPATVIGLVAGV), and 167-187 (ICGGLVLCLIGLKILLEHTLL).

It belongs to the MntP (TC 9.B.29) family.

The protein resides in the cell inner membrane. Functionally, probably functions as a manganese efflux pump. The sequence is that of Putative manganese efflux pump MntP from Citrifermentans bemidjiense (strain ATCC BAA-1014 / DSM 16622 / JCM 12645 / Bem) (Geobacter bemidjiensis).